A 416-amino-acid chain; its full sequence is UDP-N-acetylmuramoylalanine--D-glutamate ligase (416 aa).

104 to 110 (GSNGKST) is a binding site for ATP.

This sequence belongs to the MurCDEF family.

It localises to the cytoplasm. The enzyme catalyses UDP-N-acetyl-alpha-D-muramoyl-L-alanine + D-glutamate + ATP = UDP-N-acetyl-alpha-D-muramoyl-L-alanyl-D-glutamate + ADP + phosphate + H(+). It participates in cell wall biogenesis; peptidoglycan biosynthesis. Its function is as follows. Cell wall formation. Catalyzes the addition of glutamate to the nucleotide precursor UDP-N-acetylmuramoyl-L-alanine (UMA). This Francisella tularensis subsp. tularensis (strain WY96-3418) protein is UDP-N-acetylmuramoylalanine--D-glutamate ligase.